Reading from the N-terminus, the 248-residue chain is 2,3-bisphosphoglycerate-dependent phosphoglycerate mutase (248 aa).

Substrate is bound by residues 9 to 16, 22 to 23, arginine 61, 88 to 91, lysine 99, 115 to 116, and 183 to 184; these read RHGHSEWN, TG, ERHY, RR, and GN. Histidine 10 functions as the Tele-phosphohistidine intermediate in the catalytic mechanism. Glutamate 88 functions as the Proton donor/acceptor in the catalytic mechanism.

The protein belongs to the phosphoglycerate mutase family. BPG-dependent PGAM subfamily.

The enzyme catalyses (2R)-2-phosphoglycerate = (2R)-3-phosphoglycerate. It functions in the pathway carbohydrate degradation; glycolysis; pyruvate from D-glyceraldehyde 3-phosphate: step 3/5. In terms of biological role, catalyzes the interconversion of 2-phosphoglycerate and 3-phosphoglycerate. This Arthrobacter sp. (strain FB24) protein is 2,3-bisphosphoglycerate-dependent phosphoglycerate mutase.